The chain runs to 493 residues: Tripartite motif-containing protein 5 (493 aa).

Ala2 bears the N-acetylalanine mark. The RING-type zinc finger occupies 15-59; the sequence is CPICLELLTQPLSLDCGHSFCQACLTANHKKSTLDKGERSCPVCR. Ser86 bears the Phosphoserine mark. Residues 90–132 form a B box-type zinc finger; sequence QKVDHCARHGEKLLLFCKEDGKVICWLCERSQEHRGHHTFLTE. Residues Cys95, His98, Cys117, and His123 each coordinate Zn(2+). Positions 131 to 223 form a coiled coil; it reads TEEVAQKYQV…LTKSETEMVQ (93 aa). The tract at residues 185–198 is required for interaction with GABARAP and for autophagy; it reads FEQLRDILDWEESN. The region spanning 281–493 is the B30.2/SPRY domain; sequence LKGMLEVFRE…VPMTLCSPSS (213 aa).

Belongs to the TRIM/RBCC family. Can form homodimers and homotrimers. In addition to lower-order dimerization, also exhibits a higher-order multimerization and both low- and high-order multimerizations are essential for its restriction activity. Interacts with BTBD1 and BTBD2. Interacts with PSMC4, PSMC5, PSMD7 and HSPA8/HSC70. Interacts (via B30.2/SPRY domain) with HSPA1A/B. Interacts with PSMC2, MAP3K7/TAK1, TAB2 and TAB3. Interacts with SQSTM1. Interacts with TRIM6 and TRIM34. Interacts with ULK1 (phosphorylated form), GABARAP, GABARAPL1, GABARAPL2, MAP1LC3A, MAP1LC3C and BECN1. Degraded in a proteasome-independent fashion in the absence of viral infection but in a proteasome-dependent fashion following exposure to restriction sensitive virus. Post-translationally, autoubiquitinated in a RING finger- and UBE2D2-dependent manner. Monoubiquitinated by TRIM21. Deubiquitinated by Yersinia YopJ. Ubiquitination may not lead to proteasomal degradation.

Its subcellular location is the cytoplasm. It localises to the nucleus. The catalysed reaction is S-ubiquitinyl-[E2 ubiquitin-conjugating enzyme]-L-cysteine + [acceptor protein]-L-lysine = [E2 ubiquitin-conjugating enzyme]-L-cysteine + N(6)-ubiquitinyl-[acceptor protein]-L-lysine.. The protein operates within protein modification; protein ubiquitination. Capsid-specific restriction factor that prevents infection from non-host-adapted retroviruses. Blocks viral replication early in the life cycle, after viral entry but before reverse transcription. In addition to acting as a capsid-specific restriction factor, also acts as a pattern recognition receptor that activates innate immune signaling in response to the retroviral capsid lattice. Binding to the viral capsid triggers its E3 ubiquitin ligase activity, and in concert with the heterodimeric ubiquitin conjugating enzyme complex UBE2V1-UBE2N (also known as UBC13-UEV1A complex) generates 'Lys-63'-linked polyubiquitin chains, which in turn are catalysts in the autophosphorylation of the MAP3K7/TAK1 complex (includes TAK1, TAB2, and TAB3). Activation of the MAP3K7/TAK1 complex by autophosphorylation results in the induction and expression of NF-kappa-B and MAPK-responsive inflammatory genes, thereby leading to an innate immune response in the infected cell. Plays a role in regulating autophagy through activation of autophagy regulator BECN1 by causing its dissociation from its inhibitors BCL2 and TAB2. The chain is Tripartite motif-containing protein 5 (TRIM5) from Pongo abelii (Sumatran orangutan).